A 265-amino-acid chain; its full sequence is 3-methyl-2-oxobutanoate hydroxymethyltransferase (265 aa).

Mg(2+)-binding residues include Asp-45 and Asp-84. Residues 45–46 (DS), Asp-84, and Lys-112 each bind 3-methyl-2-oxobutanoate. Residue Glu-114 participates in Mg(2+) binding. The Proton acceptor role is filled by Glu-182.

The protein belongs to the PanB family. As to quaternary structure, homodecamer; pentamer of dimers. It depends on Mg(2+) as a cofactor.

It localises to the cytoplasm. It carries out the reaction 3-methyl-2-oxobutanoate + (6R)-5,10-methylene-5,6,7,8-tetrahydrofolate + H2O = 2-dehydropantoate + (6S)-5,6,7,8-tetrahydrofolate. Its pathway is cofactor biosynthesis; (R)-pantothenate biosynthesis; (R)-pantoate from 3-methyl-2-oxobutanoate: step 1/2. Its function is as follows. Catalyzes the reversible reaction in which hydroxymethyl group from 5,10-methylenetetrahydrofolate is transferred onto alpha-ketoisovalerate to form ketopantoate. The polypeptide is 3-methyl-2-oxobutanoate hydroxymethyltransferase (Baumannia cicadellinicola subsp. Homalodisca coagulata).